The sequence spans 286 residues: 3-hydroxyanthranilate 3,4-dioxygenase (286 aa).

Positions 1–160 are domain A (catalytic); it reads MERPVRVKAW…SEQYRTGKPN (160 aa). Residue Arg-43 coordinates O2. Residues His-47, Glu-53, and His-91 each coordinate Fe cation. Glu-53 contributes to the substrate binding site. Residues Arg-95 and Glu-105 each coordinate substrate. Residues 161 to 177 are linker; the sequence is PDQLLKEPPFPLSTRSV. The tract at residues 178 to 286 is domain B; sequence MEPMCLEAWL…QDPACKKSLG (109 aa).

It belongs to the 3-HAO family. In terms of assembly, monomer. The cofactor is Fe(2+).

Its subcellular location is the cytoplasm. It is found in the cytosol. It catalyses the reaction 3-hydroxyanthranilate + O2 = (2Z,4Z)-2-amino-3-carboxymuconate 6-semialdehyde. Its pathway is cofactor biosynthesis; NAD(+) biosynthesis; quinolinate from L-kynurenine: step 3/3. Its function is as follows. Catalyzes the oxidative ring opening of 3-hydroxyanthranilate to 2-amino-3-carboxymuconate semialdehyde, which spontaneously cyclizes to quinolinate. The sequence is that of 3-hydroxyanthranilate 3,4-dioxygenase from Bos taurus (Bovine).